Reading from the N-terminus, the 438-residue chain is 3-phosphoshikimate 1-carboxyvinyltransferase (438 aa).

Lys-23, Ser-24, and Arg-28 together coordinate 3-phosphoshikimate. Phosphoenolpyruvate is bound at residue Lys-23. Positions 94 and 122 each coordinate phosphoenolpyruvate. Ser-167, Gln-169, Asp-321, and Lys-348 together coordinate 3-phosphoshikimate. Gln-169 lines the phosphoenolpyruvate pocket. The active-site Proton acceptor is Asp-321. Phosphoenolpyruvate contacts are provided by Arg-352 and Arg-393.

It belongs to the EPSP synthase family. As to quaternary structure, monomer.

The protein resides in the cytoplasm. The catalysed reaction is 3-phosphoshikimate + phosphoenolpyruvate = 5-O-(1-carboxyvinyl)-3-phosphoshikimate + phosphate. It functions in the pathway metabolic intermediate biosynthesis; chorismate biosynthesis; chorismate from D-erythrose 4-phosphate and phosphoenolpyruvate: step 6/7. Functionally, catalyzes the transfer of the enolpyruvyl moiety of phosphoenolpyruvate (PEP) to the 5-hydroxyl of shikimate-3-phosphate (S3P) to produce enolpyruvyl shikimate-3-phosphate and inorganic phosphate. This Helicobacter hepaticus (strain ATCC 51449 / 3B1) protein is 3-phosphoshikimate 1-carboxyvinyltransferase.